A 466-amino-acid polypeptide reads, in one-letter code: UDP-N-acetylglucosamine--dolichyl-phosphate N-acetylglucosaminephosphotransferase (466 aa).

The helical transmembrane segment at 12 to 32 (AAFAVAAHAPVLGLILLGSIV) threads the bilayer. UDP-N-acetyl-alpha-D-glucosamine is bound at residue aspartate 57. Residue asparagine 59 is glycosylated (N-linked (GlcNAc...) asparagine). Glutamate 90 serves as a coordination point for UDP-N-acetyl-alpha-D-glucosamine. 2 consecutive transmembrane segments (helical) span residues 91-111 (SLGILVGAMYLSVVVVLTVCL) and 124-144 (PYASLPGPLMTITVMLLLGFV). Residue lysine 155 participates in dolichyl phosphate binding. 2 helical membrane passes run 156–176 (IILTALGSLPLIMTYDGSLSV) and 236–256 (GAALIYLGPVYLVYLSMLCIF). Dolichyl phosphate is bound at residue 255–263 (IFCTNSINI). Asparagine 262 provides a ligand contact to Mg(2+). 4 consecutive transmembrane segments (helical) span residues 263–283 (ILAGVNGVEVGQSIVIAVASV), 316–336 (DHQLRALLLLGPFIGVSLALW), 345–365 (VFVGDSYTYFAGTVLAVSSIT), and 374–394 (LFFAPQVFNFLISLPQLFSIV). Asparagine 268 is a UDP-N-acetyl-alpha-D-glucosamine binding site. Aspartate 349 contributes to the Mg(2+) binding site. A UDP-N-acetyl-alpha-D-glucosamine-binding site is contributed by 398–400 (RHR). The N-linked (GlcNAc...) asparagine glycan is linked to asparagine 416. The chain crosses the membrane as a helical span at residues 442 to 462 (CQVIACVLGFVVRYVLSAFLY).

It belongs to the glycosyltransferase 4 family. It depends on Mg(2+) as a cofactor.

Its subcellular location is the endoplasmic reticulum membrane. The catalysed reaction is a di-trans,poly-cis-dolichyl phosphate + UDP-N-acetyl-alpha-D-glucosamine = an N-acetyl-alpha-D-glucosaminyl-diphospho-di-trans,poly-cis-dolichol + UMP. Its pathway is protein modification; protein glycosylation. Its activity is regulated as follows. Inhibited by natural nucleoside antibiotic tunicamycin, which acts as a structural analog and competitor of UDP-GlcNAc. Its function is as follows. UDP-N-acetylglucosamine--dolichyl-phosphate N-acetylglucosaminephosphotransferase that operates in the biosynthetic pathway of dolichol-linked oligosaccharides, the glycan precursors employed in protein asparagine (N)-glycosylation. The assembly of dolichol-linked oligosaccharides begins on the cytosolic side of the endoplasmic reticulum membrane and finishes in its lumen. The sequential addition of sugars to dolichol pyrophosphate produces dolichol-linked oligosaccharides containing fourteen sugars, including two GlcNAcs, nine mannoses and three glucoses. Once assembled, the oligosaccharide is transferred from the lipid to nascent proteins by oligosaccharyltransferases. Catalyzes the initial step of dolichol-linked oligosaccharide biosynthesis, transfering GlcNAc-1-P from cytosolic UDP-GlcNAc onto the carrier lipid dolichyl phosphate (P-dolichol), yielding GlcNAc-P-P-dolichol embedded in the cytoplasmic leaflet of the endoplasmic reticulum membrane. This is UDP-N-acetylglucosamine--dolichyl-phosphate N-acetylglucosaminephosphotransferase (NAGT) from Leishmania amazonensis.